Here is a 268-residue protein sequence, read N- to C-terminus: Thiazole synthase (268 aa).

Lys-100 (schiff-base intermediate with DXP) is an active-site residue. 1-deoxy-D-xylulose 5-phosphate is bound by residues Gly-161, 187-188 (AG), and 209-210 (NT). A disordered region spans residues 248-268 (ASPSSPAEGMFTGTQHPAANS). A compositionally biased stretch (polar residues) spans 259–268 (TGTQHPAANS).

This sequence belongs to the ThiG family. As to quaternary structure, homotetramer. Forms heterodimers with either ThiH or ThiS.

It is found in the cytoplasm. It carries out the reaction [ThiS sulfur-carrier protein]-C-terminal-Gly-aminoethanethioate + 2-iminoacetate + 1-deoxy-D-xylulose 5-phosphate = [ThiS sulfur-carrier protein]-C-terminal Gly-Gly + 2-[(2R,5Z)-2-carboxy-4-methylthiazol-5(2H)-ylidene]ethyl phosphate + 2 H2O + H(+). It functions in the pathway cofactor biosynthesis; thiamine diphosphate biosynthesis. Its function is as follows. Catalyzes the rearrangement of 1-deoxy-D-xylulose 5-phosphate (DXP) to produce the thiazole phosphate moiety of thiamine. Sulfur is provided by the thiocarboxylate moiety of the carrier protein ThiS. In vitro, sulfur can be provided by H(2)S. In Nitrosomonas europaea (strain ATCC 19718 / CIP 103999 / KCTC 2705 / NBRC 14298), this protein is Thiazole synthase.